Consider the following 111-residue polypeptide: Ig kappa chain V-III region MOPC 70 (111 aa).

The tract at residues 1 to 23 (DIVLTQSPASLAVSLGQRATISC) is framework-1. A disulfide bridge connects residues Cys23 and Cys92. Residues 24 to 38 (RASESVDNSGISFMN) form a complementarity-determining-1 region. The framework-2 stretch occupies residues 39-53 (WFQQKPGQPPKLLIY). Positions 54 to 60 (AASNQGS) are complementarity-determining-2. Residues 61–92 (GVPARFSGSGSGTDFSLNIHPMEEDDTAMYFC) are framework-3. The complementarity-determining-3 stretch occupies residues 93–101 (QQSKEVPWT). A framework-4 region spans residues 102–111 (FGGGTKLEIK).

The protein is Ig kappa chain V-III region MOPC 70 of Mus musculus (Mouse).